We begin with the raw amino-acid sequence, 217 residues long: Uracil-DNA glycosylase (217 aa).

Catalysis depends on aspartate 62, which acts as the Proton acceptor.

This sequence belongs to the uracil-DNA glycosylase (UDG) superfamily. UNG family.

It is found in the cytoplasm. It catalyses the reaction Hydrolyzes single-stranded DNA or mismatched double-stranded DNA and polynucleotides, releasing free uracil.. In terms of biological role, excises uracil residues from the DNA which can arise as a result of misincorporation of dUMP residues by DNA polymerase or due to deamination of cytosine. In Streptococcus pneumoniae (strain P1031), this protein is Uracil-DNA glycosylase.